The primary structure comprises 861 residues: Leucine--tRNA ligase (861 aa).

The 'HIGH' region signature appears at 42–52; the sequence is PYPSGKLHMGH. Positions 620-624 match the 'KMSKS' region motif; the sequence is KMSKS. Lysine 623 serves as a coordination point for ATP.

This sequence belongs to the class-I aminoacyl-tRNA synthetase family.

Its subcellular location is the cytoplasm. It carries out the reaction tRNA(Leu) + L-leucine + ATP = L-leucyl-tRNA(Leu) + AMP + diphosphate. In Hahella chejuensis (strain KCTC 2396), this protein is Leucine--tRNA ligase.